The sequence spans 248 residues: Ubiquinone biosynthesis O-methyltransferase (248 aa).

S-adenosyl-L-methionine is bound by residues Arg41, Gly72, Asp93, and Met136.

This sequence belongs to the methyltransferase superfamily. UbiG/COQ3 family.

The enzyme catalyses a 3-demethylubiquinol + S-adenosyl-L-methionine = a ubiquinol + S-adenosyl-L-homocysteine + H(+). It carries out the reaction a 3-(all-trans-polyprenyl)benzene-1,2-diol + S-adenosyl-L-methionine = a 2-methoxy-6-(all-trans-polyprenyl)phenol + S-adenosyl-L-homocysteine + H(+). The protein operates within cofactor biosynthesis; ubiquinone biosynthesis. Functionally, O-methyltransferase that catalyzes the 2 O-methylation steps in the ubiquinone biosynthetic pathway. This Brucella abortus (strain 2308) protein is Ubiquinone biosynthesis O-methyltransferase.